Here is a 505-residue protein sequence, read N- to C-terminus: MAESAGASSFFPLVVLLLAGSGGSGPRGIQALLCACTSCLQTNYTCETDGACMVSIFNLDGVEHHVRTCIPKVELVPAGKPFYCLSSEDLRNTHCCYIDFCNKIDLRVPSGHLKEPAHPSMWGPVELVGIIAGPVFLLFLIIIIVFLVINYHQRVYHNRQRLDMEDPSCEMCLSKDKTLQDLVYDLSTSGSGSGLPLFVQRTVARTIVLQEIIGKGRFGEVWRGRWRGGDVAVKIFSSREERSWFREAEIYQTVMLRHENILGFIAADNKDNGTWTQLWLVSDYHEHGSLFDYLNRYTVTIEGMIKLALSAASGLAHLHMEIVGTQGKPGIAHRDLKSKNILVKKNGMCAIADLGLAVRHDAVTDTIDIAPNQRVGTKRYMAPEVLDETINMKHFDSFKCADIYALGLVYWEIARRCNSGGVHEDYQLPYYDLVPSDPSIEEMRKVVCDQKLRPNVPNWWQSYEALRVMGKMMRECWYANGAARLTALRIKKTLSQLSVQEDVKI.

An N-terminal signal peptide occupies residues 1–23; the sequence is MAESAGASSFFPLVVLLLAGSGG. Residues 24–126 are Extracellular-facing; the sequence is SGPRGIQALL…AHPSMWGPVE (103 aa). Asparagine 43 is a glycosylation site (N-linked (GlcNAc...) asparagine). A helical membrane pass occupies residues 127–149; it reads LVGIIAGPVFLLFLIIIIVFLVI. Residues 150–505 lie on the Cytoplasmic side of the membrane; that stretch reads NYHQRVYHNR…QLSVQEDVKI (356 aa). In terms of domain architecture, GS spans 177–206; sequence KTLQDLVYDLSTSGSGSGLPLFVQRTVART. In terms of domain architecture, Protein kinase spans 207 to 497; that stretch reads IVLQEIIGKG…LRIKKTLSQL (291 aa). ATP contacts are provided by residues 213-221 and lysine 234; that span reads IGKGRFGEV. Aspartate 335 serves as the catalytic Proton acceptor. Tyrosine 380 bears the Phosphotyrosine mark.

It belongs to the protein kinase superfamily. TKL Ser/Thr protein kinase family. TGFB receptor subfamily. Forms an activin receptor complex with activin receptor type-2 (ACVR2A or ACVR2B). Part of a complex consisting of MAGI2/ARIP1, ACVR2A, ACVR1B and SMAD3. Interacts with SMAD2 and SMAD3. Interacts with SMAD7. Interacts with FKBP1A. Interacts with IGSF1. Interacts with CRIPTO. Interacts with TDP2. Interacts with TSC22D1/TSC-22. In terms of processing, autophosphorylated. Phosphorylated by activin receptor type-2 (ACVR2A or ACVR2B) in response to activin-binding at serine and threonine residues in the GS domain. Phosphorylation of ACVR1B by activin receptor type-2 regulates association with SMAD7. Post-translationally, ubiquitinated. Level of ubiquitination is regulated by the SMAD7-SMURF1 complex. Ubiquitinated.

It localises to the cell membrane. The catalysed reaction is L-threonyl-[receptor-protein] + ATP = O-phospho-L-threonyl-[receptor-protein] + ADP + H(+). The enzyme catalyses L-seryl-[receptor-protein] + ATP = O-phospho-L-seryl-[receptor-protein] + ADP + H(+). With respect to regulation, activin receptor type-2 (ACVR2A or ACVR2B) activates the type-1 receptor through phosphorylation of its regulatory GS domain. In terms of biological role, transmembrane serine/threonine kinase activin type-1 receptor forming an activin receptor complex with activin receptor type-2 (ACVR2A or ACVR2B). Transduces the activin signal from the cell surface to the cytoplasm and is thus regulating a many physiological and pathological processes including neuronal differentiation and neuronal survival, hair follicle development and cycling, FSH production by the pituitary gland, wound healing, extracellular matrix production, immunosuppression and carcinogenesis. Activin is also thought to have a paracrine or autocrine role in follicular development in the ovary. Within the receptor complex, type-2 receptors (ACVR2A and/or ACVR2B) act as a primary activin receptors whereas the type-1 receptors like ACVR1B act as downstream transducers of activin signals. Activin binds to type-2 receptor at the plasma membrane and activates its serine-threonine kinase. The activated receptor type-2 then phosphorylates and activates the type-1 receptor such as ACVR1B. Once activated, the type-1 receptor binds and phosphorylates the SMAD proteins SMAD2 and SMAD3, on serine residues of the C-terminal tail. Soon after their association with the activin receptor and subsequent phosphorylation, SMAD2 and SMAD3 are released into the cytoplasm where they interact with the common partner SMAD4. This SMAD complex translocates into the nucleus where it mediates activin-induced transcription. Inhibitory SMAD7, which is recruited to ACVR1B through FKBP1A, can prevent the association of SMAD2 and SMAD3 with the activin receptor complex, thereby blocking the activin signal. Activin signal transduction is also antagonized by the binding to the receptor of inhibin-B via the IGSF1 inhibin coreceptor. ACVR1B also phosphorylates TDP2. This is Activin receptor type-1B (Acvr1b) from Mus musculus (Mouse).